The sequence spans 169 residues: Photosystem I assembly protein Ycf3 (169 aa).

3 TPR repeats span residues 35–68 (AFTYYRDGMSAQSEGEYAEASQNYYEAMRLEIDP), 72–105 (SYILHNIGLIHTSNGEHARALEYYFQALERNPSL), and 120–153 (GEQAIQQGDFETSEAWFGKAADHWKQAVLLAPGN).

It belongs to the Ycf3 family.

The protein localises to the plastid. It localises to the chloroplast thylakoid membrane. In terms of biological role, essential for the assembly of the photosystem I (PSI) complex. May act as a chaperone-like factor to guide the assembly of the PSI subunits. This is Photosystem I assembly protein Ycf3 from Huperzia lucidula (Shining clubmoss).